A 707-amino-acid chain; its full sequence is D-(-)-3-hydroxybutyrate oligomer hydrolase (707 aa).

The first 24 residues, 1 to 24, serve as a signal peptide directing secretion; that stretch reads MHHDNFRRLGNAAFAAAAALLAVA. S311 (charge relay system) is an active-site residue.

This sequence belongs to the D-(-)-3-hydroxybutyrate oligomer hydrolase family.

It is found in the secreted. It catalyses the reaction (3R)-hydroxybutanoate dimer + H2O = 2 (R)-3-hydroxybutanoate + H(+). The protein operates within lipid metabolism; butanoate metabolism. Participates in the degradation of poly-3-hydroxybutyrate (PHB). It works downstream of poly(3-hydroxybutyrate) depolymerase, hydrolyzing D(-)-3-hydroxybutyrate oligomers of various length (3HB-oligomers) into 3HB-monomers. The protein is D-(-)-3-hydroxybutyrate oligomer hydrolase of Cupriavidus pinatubonensis (strain JMP 134 / LMG 1197) (Cupriavidus necator (strain JMP 134)).